Consider the following 24-residue polypeptide: Brevinin-1GRa (24 aa).

As to expression, expressed by the skin glands.

It is found in the secreted. Antimicrobial peptide active against the Gram-positive bacterium S.aureus (MIC=12.5 uM) and against the Gram-negative bacteria E.coli (MIC=25 uM). This chain is Brevinin-1GRa, found in Odorrana grahami (Yunnanfu frog).